Consider the following 388-residue polypeptide: Mannitol-1-phosphate 5-dehydrogenase (388 aa).

NAD(+) is bound at residue 5 to 16 (AVHFGGGNIGRG). The active site involves K213.

The protein belongs to the mannitol dehydrogenase family. In terms of assembly, monomer.

The enzyme catalyses D-mannitol 1-phosphate + NAD(+) = beta-D-fructose 6-phosphate + NADH + H(+). Its function is as follows. Catalyzes the NAD(H)-dependent interconversion of D-fructose 6-phosphate and D-mannitol 1-phosphate in the mannitol metabolic pathway. This Penicillium rubens (strain ATCC 28089 / DSM 1075 / NRRL 1951 / Wisconsin 54-1255) (Penicillium chrysogenum) protein is Mannitol-1-phosphate 5-dehydrogenase.